The primary structure comprises 111 residues: Large ribosomal subunit protein P2w (111 aa).

A disordered region spans residues 63-111 (ASVPSGGGVAVSAAPSSGGGGAAAPAEKKEAKKEEKEESDDDMGFSLFE). Residues 88–98 (AEKKEAKKEEK) are compositionally biased toward basic and acidic residues. At Ser101 the chain carries Phosphoserine.

This sequence belongs to the eukaryotic ribosomal protein P1/P2 family. In terms of assembly, P1 and P2 exist as dimers at the large ribosomal subunit.

Its function is as follows. Plays an important role in the elongation step of protein synthesis. The sequence is that of Large ribosomal subunit protein P2w (RPP2D) from Arabidopsis thaliana (Mouse-ear cress).